Here is a 200-residue protein sequence, read N- to C-terminus: Recombination protein RecR (200 aa).

The C4-type zinc finger occupies 59–74 (CGTCGSLDVTDPCAVC). A Toprim domain is found at 82 to 177 (RLLCVVEEVG…PVTMLARGVP (96 aa)).

Belongs to the RecR family.

May play a role in DNA repair. It seems to be involved in an RecBC-independent recombinational process of DNA repair. It may act with RecF and RecO. The polypeptide is Recombination protein RecR (Caulobacter vibrioides (strain ATCC 19089 / CIP 103742 / CB 15) (Caulobacter crescentus)).